The primary structure comprises 605 residues: Lysophospholipase 1 (605 aa).

Positions 1–17 (MILHHLLILLIINYCVA) are cleaved as a signal peptide. The PLA2c domain maps to 30–565 (SCPSSQLIRS…ENYCWDGTIY (536 aa)). N-linked (GlcNAc...) asparagine glycans are attached at residues Asn199, Asn261, Asn399, Asn451, Asn465, Asn492, and Asn573.

It belongs to the lysophospholipase family.

The protein resides in the secreted. The enzyme catalyses a 1-acyl-sn-glycero-3-phosphocholine + H2O = sn-glycerol 3-phosphocholine + a fatty acid + H(+). Its function is as follows. Catalyzes the release of fatty acids from lysophospholipids. Phospholipase B may well contribute to pathogenicity by abetting the fungus in damaging and traversing host cell membranes, processes which likely increase the rapidity of disseminated infection. This is Lysophospholipase 1 from Candida albicans (strain SC5314 / ATCC MYA-2876) (Yeast).